A 683-amino-acid chain; its full sequence is E3 ubiquitin-protein ligase WAVH1 (683 aa).

An RING-type; atypical zinc finger spans residues 130–176; sequence CGICLQSVKSGQGTAIFTAECSHTFHFPCVTSRAAANHNRLASCPVC. Residues 302–438 form the VWFA domain; the sequence is DLVAVLDVSG…AHSRIPIHTI (137 aa).

Expressed in root tips and leaf primordia.

The catalysed reaction is S-ubiquitinyl-[E2 ubiquitin-conjugating enzyme]-L-cysteine + [acceptor protein]-L-lysine = [E2 ubiquitin-conjugating enzyme]-L-cysteine + N(6)-ubiquitinyl-[acceptor protein]-L-lysine.. In terms of biological role, E3 ubiquitin-protein ligase involved in the regulation of root growth. Acts as a positive regulator of root gravitropism. Possesses E3 protein ligase activity in vitro. This is E3 ubiquitin-protein ligase WAVH1 from Arabidopsis thaliana (Mouse-ear cress).